The sequence spans 71 residues: Large ribosomal subunit protein bL31 (71 aa).

Residues cysteine 16, cysteine 18, cysteine 36, and cysteine 39 each coordinate Zn(2+).

It belongs to the bacterial ribosomal protein bL31 family. Type A subfamily. Part of the 50S ribosomal subunit. Requires Zn(2+) as cofactor.

Binds the 23S rRNA. The sequence is that of Large ribosomal subunit protein bL31 from Pseudothermotoga lettingae (strain ATCC BAA-301 / DSM 14385 / NBRC 107922 / TMO) (Thermotoga lettingae).